Consider the following 128-residue polypeptide: Lysozyme C-1 (128 aa).

A C-type lysozyme domain is found at 1 to 128 (KVYDRCEFAR…VSQYIRGCKL (128 aa)). 4 disulfides stabilise this stretch: C6-C126, C30-C114, C63-C79, and C75-C93. Residues E35 and D51 contribute to the active site.

This sequence belongs to the glycosyl hydrolase 22 family. In terms of assembly, monomer.

The protein localises to the secreted. It catalyses the reaction Hydrolysis of (1-&gt;4)-beta-linkages between N-acetylmuramic acid and N-acetyl-D-glucosamine residues in a peptidoglycan and between N-acetyl-D-glucosamine residues in chitodextrins.. Its function is as follows. Lysozymes have primarily a bacteriolytic function; those in tissues and body fluids are associated with the monocyte-macrophage system and enhance the activity of immunoagents. This Sus scrofa (Pig) protein is Lysozyme C-1.